A 115-amino-acid chain; its full sequence is NADH-ubiquinone oxidoreductase chain 3 (115 aa).

3 consecutive transmembrane segments (helical) span residues 3–23 (LPLA…IAFW), 55–75 (FFLV…LLPL), and 86–106 (LMLT…AYEW).

This sequence belongs to the complex I subunit 3 family. Core subunit of respiratory chain NADH dehydrogenase (Complex I) which is composed of 45 different subunits. Interacts with TMEM186. Interacts with TMEM242.

The protein localises to the mitochondrion inner membrane. It catalyses the reaction a ubiquinone + NADH + 5 H(+)(in) = a ubiquinol + NAD(+) + 4 H(+)(out). Core subunit of the mitochondrial membrane respiratory chain NADH dehydrogenase (Complex I) which catalyzes electron transfer from NADH through the respiratory chain, using ubiquinone as an electron acceptor. Essential for the catalytic activity of complex I. This Lemur catta (Ring-tailed lemur) protein is NADH-ubiquinone oxidoreductase chain 3.